We begin with the raw amino-acid sequence, 122 residues long: Large ribosomal subunit protein uL14 (122 aa).

The protein belongs to the universal ribosomal protein uL14 family. Part of the 50S ribosomal subunit. Forms a cluster with proteins L3 and L19. In the 70S ribosome, L14 and L19 interact and together make contacts with the 16S rRNA in bridges B5 and B8.

In terms of biological role, binds to 23S rRNA. Forms part of two intersubunit bridges in the 70S ribosome. The polypeptide is Large ribosomal subunit protein uL14 (Nocardia farcinica (strain IFM 10152)).